Reading from the N-terminus, the 542-residue chain is CTP synthase (542 aa).

The segment at 1–265 (MTKYIFVTGG…LKPISKELSL (265 aa)) is amidoligase domain. S13 serves as a coordination point for CTP. S13 is a binding site for UTP. Residues 14–19 (SLGKGI) and D71 each bind ATP. Residues D71 and E139 each contribute to the Mg(2+) site. CTP is bound by residues 146-148 (DIE), 186-191 (KSKPTQ), and K222. UTP is bound by residues 186–191 (KSKPTQ) and K222. The Glutamine amidotransferase type-1 domain maps to 290 to 541 (VLGFVGKYLE…VEATLAISQE (252 aa)). Residue G352 coordinates L-glutamine. C379 serves as the catalytic Nucleophile; for glutamine hydrolysis. L-glutamine contacts are provided by residues 380–383 (LGMQ), E403, and R471. Catalysis depends on residues H514 and E516.

The protein belongs to the CTP synthase family. In terms of assembly, homotetramer.

It catalyses the reaction UTP + L-glutamine + ATP + H2O = CTP + L-glutamate + ADP + phosphate + 2 H(+). It carries out the reaction L-glutamine + H2O = L-glutamate + NH4(+). The catalysed reaction is UTP + NH4(+) + ATP = CTP + ADP + phosphate + 2 H(+). It functions in the pathway pyrimidine metabolism; CTP biosynthesis via de novo pathway; CTP from UDP: step 2/2. Its activity is regulated as follows. Allosterically activated by GTP, when glutamine is the substrate; GTP has no effect on the reaction when ammonia is the substrate. The allosteric effector GTP functions by stabilizing the protein conformation that binds the tetrahedral intermediate(s) formed during glutamine hydrolysis. Inhibited by the product CTP, via allosteric rather than competitive inhibition. Catalyzes the ATP-dependent amination of UTP to CTP with either L-glutamine or ammonia as the source of nitrogen. Regulates intracellular CTP levels through interactions with the four ribonucleotide triphosphates. In Sulfurimonas denitrificans (strain ATCC 33889 / DSM 1251) (Thiomicrospira denitrificans (strain ATCC 33889 / DSM 1251)), this protein is CTP synthase.